Reading from the N-terminus, the 33-residue chain is Protamine-1A (33 aa).

The disordered stretch occupies residues 1-33 (PRRRRSSSRPVRRRRRPRRVSRRRRRRGGRRRR).

In terms of tissue distribution, testis.

It localises to the nucleus. It is found in the chromosome. Functionally, protamines substitute for histones in the chromatin of sperm during the haploid phase of spermatogenesis. They compact sperm DNA into a highly condensed, stable and inactive complex. This Oncorhynchus mykiss (Rainbow trout) protein is Protamine-1A.